The chain runs to 104 residues: ATP-dependent Clp protease adapter protein ClpS (104 aa).

Belongs to the ClpS family. As to quaternary structure, binds to the N-terminal domain of the chaperone ClpA.

Functionally, involved in the modulation of the specificity of the ClpAP-mediated ATP-dependent protein degradation. The chain is ATP-dependent Clp protease adapter protein ClpS from Bordetella avium (strain 197N).